The primary structure comprises 48 residues: uncharacterized protein (48 aa).

Residues 20-37 (ILASPLFFANYVLHAAIH) form a helical membrane-spanning segment.

Its subcellular location is the membrane. This is an uncharacterized protein from Saccharomyces cerevisiae (strain ATCC 204508 / S288c) (Baker's yeast).